Reading from the N-terminus, the 103-residue chain is Small ribosomal subunit protein uS10 (103 aa).

This sequence belongs to the universal ribosomal protein uS10 family. Part of the 30S ribosomal subunit.

In terms of biological role, involved in the binding of tRNA to the ribosomes. The protein is Small ribosomal subunit protein uS10 of Korarchaeum cryptofilum (strain OPF8).